A 247-amino-acid polypeptide reads, in one-letter code: Phosphoglycerate mutase 1 (247 aa).

Substrate contacts are provided by residues 8-15 (RHGQSEWN) and 21-22 (TG). Catalysis depends on His9, which acts as the Tele-phosphohistidine intermediate. Ser12 carries the post-translational modification Phosphoserine. A Glycyl lysine isopeptide (Lys-Gly) (interchain with G-Cter in ubiquitin) cross-link involves residue Lys31. At Tyr49 the chain carries Phosphotyrosine. Residue Lys57 forms a Glycyl lysine isopeptide (Lys-Gly) (interchain with G-Cter in ubiquitin) linkage. Arg60 serves as a coordination point for substrate. A Glycyl lysine isopeptide (Lys-Gly) (interchain with G-Cter in ubiquitin) cross-link involves residue Lys71. Residue Glu87 is the Proton donor/acceptor of the active site. Residues 87–90 (ERHY), Lys98, and 114–115 (RR) contribute to the substrate site. 3 positions are modified to phosphoserine: Ser116, Ser127, and Ser128. Residues Lys139 and Lys175 each participate in a glycyl lysine isopeptide (Lys-Gly) (interchain with G-Cter in ubiquitin) cross-link. 183–184 (GN) is a substrate binding site. A Phosphoserine modification is found at Ser185. Residue Lys191 forms a Glycyl lysine isopeptide (Lys-Gly) (interchain with G-Cter in ubiquitin) linkage. Residue Ser197 is modified to Phosphoserine.

Belongs to the phosphoglycerate mutase family. BPG-dependent PGAM subfamily. In terms of assembly, homotetramer: dimer of dimers.

It localises to the cytoplasm. The protein localises to the mitochondrion outer membrane. The protein resides in the mitochondrion intermembrane space. It carries out the reaction (2R)-2-phosphoglycerate = (2R)-3-phosphoglycerate. The protein operates within carbohydrate degradation; glycolysis; pyruvate from D-glyceraldehyde 3-phosphate: step 3/5. With respect to regulation, inhibited by inositol hexakisphosphate and benzene tri-, tetra- and hexacarboxylates. In terms of biological role, interconversion of 3- and 2-phosphoglycerate with 2,3-bisphosphoglycerate as the primer of the reaction. Can also catalyze the reaction of EC 5.4.2.4 (synthase), but with a reduced activity. This is Phosphoglycerate mutase 1 (GPM1) from Saccharomyces cerevisiae (strain ATCC 204508 / S288c) (Baker's yeast).